A 323-amino-acid chain; its full sequence is Beta-ketoacyl-[acyl-carrier-protein] synthase III 1 (323 aa).

Residues Cys114 and His254 contribute to the active site. The segment at 255 to 259 is ACP-binding; sequence QANLR. The active site involves Asn284.

Belongs to the thiolase-like superfamily. FabH family. As to quaternary structure, homodimer.

It localises to the cytoplasm. It catalyses the reaction malonyl-[ACP] + acetyl-CoA + H(+) = 3-oxobutanoyl-[ACP] + CO2 + CoA. Its pathway is lipid metabolism; fatty acid biosynthesis. Catalyzes the condensation reaction of fatty acid synthesis by the addition to an acyl acceptor of two carbons from malonyl-ACP. Catalyzes the first condensation reaction which initiates fatty acid synthesis and may therefore play a role in governing the total rate of fatty acid production. Possesses both acetoacetyl-ACP synthase and acetyl transacylase activities. Its substrate specificity determines the biosynthesis of branched-chain and/or straight-chain of fatty acids. This is Beta-ketoacyl-[acyl-carrier-protein] synthase III 1 from Lactiplantibacillus plantarum (strain ATCC BAA-793 / NCIMB 8826 / WCFS1) (Lactobacillus plantarum).